The following is a 383-amino-acid chain: Chitinase-3-like protein 1 (383 aa).

Residues 1-21 (MGLRVAQTGFVVLVLLQSCAA) form the signal peptide. Residues 22–383 (YKLICYYTSW…NAIKDVLAGV (362 aa)) enclose the GH18 domain. Cys-26 and Cys-51 are oxidised to a cystine. Residue Asn-60 is glycosylated (N-linked (GlcNAc...) asparagine). Chitin is bound by residues 70-71 (EW), 97-100 (GGWN), Tyr-141, 204-207 (LTYD), and Lys-263. Cys-300 and Cys-364 are joined by a disulfide. The important for AKT1 activation and IL8 production stretch occupies residues 324 to 338 (QWVAYDDQESVKNKA). Trp-352 is a chitin binding site.

Belongs to the glycosyl hydrolase 18 family. Monomer. As to expression, detected in mammary gland.

It localises to the secreted. It is found in the extracellular space. The protein resides in the cytoplasm. The protein localises to the perinuclear region. Its subcellular location is the endoplasmic reticulum. Functionally, carbohydrate-binding lectin with a preference for chitin. Has no chitinase activity. May play a role in tissue remodeling and in the capacity of cells to respond to and cope with changes in their environment. Plays a role in T-helper cell type 2 (Th2) inflammatory response and IL-13-induced inflammation, regulating allergen sensitization, inflammatory cell apoptosis, dendritic cell accumulation and M2 macrophage differentiation. Facilitates invasion of pathogenic enteric bacteria into colonic mucosa and lymphoid organs. Mediates activation of AKT1 signaling pathway and subsequent IL8 production in colonic epithelial cells. Regulates antibacterial responses in lung by contributing to macrophage bacterial killing, controlling bacterial dissemination and augmenting host tolerance. Also regulates hyperoxia-induced injury, inflammation and epithelial apoptosis in lung. The protein is Chitinase-3-like protein 1 (CHI3L1) of Bubalus bubalis (Domestic water buffalo).